Reading from the N-terminus, the 398-residue chain is Phosphoglycerate kinase (398 aa).

Substrate contacts are provided by residues 21 to 23 (DFN), R36, 59 to 62 (HLGR), R119, and R157. ATP is bound by residues K208, G296, E327, and 354 to 357 (GGDS).

This sequence belongs to the phosphoglycerate kinase family. In terms of assembly, monomer.

The protein localises to the cytoplasm. The enzyme catalyses (2R)-3-phosphoglycerate + ATP = (2R)-3-phospho-glyceroyl phosphate + ADP. It functions in the pathway carbohydrate degradation; glycolysis; pyruvate from D-glyceraldehyde 3-phosphate: step 2/5. In Lactococcus lactis subsp. lactis (strain IL1403) (Streptococcus lactis), this protein is Phosphoglycerate kinase (pgk).